Consider the following 349-residue polypeptide: Transcription factor HBP-1a (349 aa).

The segment covering 1 to 11 (MGSNDPSTPSK) has biased composition (polar residues). 4 disordered regions span residues 1-39 (MGSN…WPGF), 101-196 (FHYP…NKPM), 224-277 (GATG…QAEC), and 312-349 (NTSL…QKEP). Positions 113-124 (PAGAQGAAPGAA) are enriched in low complexity. Residues 174–191 (NENGSAQNGVSHSSSHGT) are compositionally biased toward polar residues. Residues 252–315 (ELKKQKRKLS…EELLSKNTSL (64 aa)) form the bZIP domain. The basic motif stretch occupies residues 254–273 (KKQKRKLSNRESARRSRLRK). A compositionally biased stretch (basic and acidic residues) spans 261 to 277 (SNRESARRSRLRKQAEC). The segment at 280-315 (LGQRAEALKSENSSLRIELDRIKKEYEELLSKNTSL) is leucine-zipper. Residues 334–349 (MNERGDTNGGSHQKEP) are compositionally biased toward basic and acidic residues.

Belongs to the bZIP family. Binds DNA as a dimer.

The protein resides in the nucleus. Binds to the hexamer motif 5'-ACGTCA-3' of histone gene promoters. In Triticum aestivum (Wheat), this protein is Transcription factor HBP-1a.